We begin with the raw amino-acid sequence, 252 residues long: ATP synthase subunit a (252 aa).

Transmembrane regions (helical) follow at residues 29–49 (FTNV…FLFI), 87–107 (FFPL…IGLF), 117–137 (IMIT…YGFY), 146–166 (LFVP…IEII), 196–216 (FIVS…LPLI), and 219–239 (VAIT…FTVL).

This sequence belongs to the ATPase A chain family. F-type ATPases have 2 components, CF(1) - the catalytic core - and CF(0) - the membrane proton channel. CF(1) has five subunits: alpha(3), beta(3), gamma(1), delta(1), epsilon(1). CF(0) has three main subunits: a(1), b(2) and c(9-12). The alpha and beta chains form an alternating ring which encloses part of the gamma chain. CF(1) is attached to CF(0) by a central stalk formed by the gamma and epsilon chains, while a peripheral stalk is formed by the delta and b chains.

It is found in the cell inner membrane. Functionally, key component of the proton channel; it plays a direct role in the translocation of protons across the membrane. The sequence is that of ATP synthase subunit a from Bartonella tribocorum (strain CIP 105476 / IBS 506).